Reading from the N-terminus, the 918-residue chain is Chitin synthase C (918 aa).

The disordered stretch occupies residues 1 to 63 (MSYNRLGDPY…EMPSSDRLAE (63 aa)). A compositionally biased stretch (low complexity) spans 22-37 (NPSSLSNRSPSPGRPL). 4 consecutive transmembrane segments (helical) span residues 562-581 (WLNG…YQLW), 605-625 (LFAW…TTYL), 637-657 (VLGV…FVLS), and 672-692 (MVYL…FVTV). Residue N712 is glycosylated (N-linked (GlcNAc...) asparagine). 3 helical membrane-spanning segments follow: residues 715–735 (FFSI…ASII), 845–865 (VVLV…SSAG), and 890–910 (VVLW…MWFL).

This sequence belongs to the chitin synthase family. Class I subfamily. As to expression, mainly expressed in hyphae and conidiphores. Relatively strongly expressed in young cleistothecia and in mature ascospores, but negligible in Huelle cells.

The protein localises to the cell membrane. Its subcellular location is the cell septum. The protein resides in the cell tip. The enzyme catalyses [(1-&gt;4)-N-acetyl-beta-D-glucosaminyl](n) + UDP-N-acetyl-alpha-D-glucosamine = [(1-&gt;4)-N-acetyl-beta-D-glucosaminyl](n+1) + UDP + H(+). In terms of biological role, polymerizes chitin, a structural polymer of the cell wall and septum, by transferring the sugar moiety of UDP-GlcNAc to the non-reducing end of the growing chitin polymer. ChsC and chsA share critical functions in hyphal wall integrity and differentiation. ChsA and chsC share also overlapping roles in septum formation. The polypeptide is Chitin synthase C (Emericella nidulans (strain FGSC A4 / ATCC 38163 / CBS 112.46 / NRRL 194 / M139) (Aspergillus nidulans)).